The primary structure comprises 379 residues: Putative thylakoid lumen peptidyl-prolyl cis-trans isomerase sll0408 (379 aa).

The signal sequence occupies residues 1 to 33 (MQIIKTPLGIITRRGLQLSLLSLLLTMLSLTWA). The region spanning 190–378 (GRATVEMTTN…SGADNLVNGN (189 aa)) is the PPIase cyclophilin-type domain.

It localises to the cellular thylakoid lumen. The enzyme catalyses [protein]-peptidylproline (omega=180) = [protein]-peptidylproline (omega=0). In terms of biological role, PPIases accelerate the folding of proteins. It catalyzes the cis-trans isomerization of proline imidic peptide bonds in oligopeptides. Required for the assembly and stabilization of PSII. This Synechocystis sp. (strain ATCC 27184 / PCC 6803 / Kazusa) protein is Putative thylakoid lumen peptidyl-prolyl cis-trans isomerase sll0408.